Here is a 198-residue protein sequence, read N- to C-terminus: Recombination protein RecR (198 aa).

The C4-type zinc-finger motif lies at 57–72; sequence CSVCGHITENDPCYIC. The 96-residue stretch at 80 to 175 folds into the Toprim domain; the sequence is SVICVVEDDK…KVTRLAQGLS (96 aa).

This sequence belongs to the RecR family.

May play a role in DNA repair. It seems to be involved in an RecBC-independent recombinational process of DNA repair. It may act with RecF and RecO. This is Recombination protein RecR from Staphylococcus aureus (strain MRSA252).